The chain runs to 1228 residues: Apical endosomal glycoprotein (1228 aa).

Positions 1–21 (MCLPSHLLSTWVLFMAAQSLG) are cleaved as a signal peptide. Residues 23–1159 (TWLPNHCRSP…GEVAAPVSVP (1137 aa)) are Extracellular-facing. Residues 28–49 (HCRSPIKAVCNFVCDCGDCSDE) enclose the LDL-receptor class A 1; truncated domain. The MAM 1 domain occupies 65-223 (FTCNFEQDSC…DDVEFRDCGL (159 aa)). A glycan (N-linked (GlcNAc...) asparagine) is linked at N204. In terms of domain architecture, LDL-receptor class A 2 spans 229 to 267 (RCPLGHHHCQNKACVEPHQLCDGEDNCGDRSDEDPLICS). Intrachain disulfides connect C230–C242, C237–C255, and C249–C266. In terms of domain architecture, MAM 2 spans 270-426 (MATDFETGLG…DLIMSSHCML (157 aa)). N290 and N340 each carry an N-linked (GlcNAc...) asparagine glycan. Positions 457–492 (TCEPGHLSCGDLCVPPEQLCDFQKHCAEGEDEHKCG) constitute an LDL-receptor class A 3 domain. 3 disulfides stabilise this stretch: C458–C469, C465–C482, and C476–C491. MAM domains are found at residues 492 to 649 (GTTD…DCNP), 659 to 815 (LSCN…PCWA), 817 to 975 (KSCS…PCPQ), and 977 to 1144 (GSCD…QCKQ). A glycan (N-linked (GlcNAc...) asparagine) is linked at N641. N841 is a glycosylation site (N-linked (GlcNAc...) asparagine). A helical membrane pass occupies residues 1160–1180 (VAVGGALLFFMFLVLMGLGGW). Over 1181 to 1228 (HWLQKQHCPGQRSTDAAASGFANILFNADHVTLPESITSNPQSPPDLA) the chain is Cytoplasmic.

It is found in the membrane. Probably involved in the sorting and selective transport of receptors and ligands across polarized epithelia. This chain is Apical endosomal glycoprotein, found in Mus musculus (Mouse).